A 192-amino-acid chain; its full sequence is Ion-translocating oxidoreductase complex subunit A (192 aa).

Helical transmembrane passes span 5 to 25, 38 to 58, 72 to 92, 102 to 122, 134 to 154, and 171 to 191; these read LLLL…FLGL, AIGM…LSFL, LRTM…EMLV, ALGI…VALL, AIYG…FSAM, and AIAM…AGLI.

It belongs to the NqrDE/RnfAE family. As to quaternary structure, the complex is composed of six subunits: RnfA, RnfB, RnfC, RnfD, RnfE and RnfG.

It is found in the cell inner membrane. Functionally, part of a membrane-bound complex that couples electron transfer with translocation of ions across the membrane. This chain is Ion-translocating oxidoreductase complex subunit A, found in Shewanella denitrificans (strain OS217 / ATCC BAA-1090 / DSM 15013).